A 637-amino-acid chain; its full sequence is Proton myo-inositol cotransporter (637 aa).

The Cytoplasmic segment spans residues 1 to 65; sequence MSRKASEDVE…AARRQFQRDE (65 aa). A Phosphoserine modification is found at S6. Positions 16–38 are disordered; it reads LSSLMGERRRRQPEPGAPGGERS. 2 positions are modified to phosphoserine: S44 and S47. A helical membrane pass occupies residues 66–86; it reads TPAFVYAAAAFSALGGFLFGY. Over 87 to 114 the chain is Extracellular; it reads DTGVVSGAMLLLRRQMRLGAMWQELLVS. The chain crosses the membrane as a helical span at residues 115–135; the sequence is GAVGAAAVAALAGGALNGALG. Over 136–137 the chain is Cytoplasmic; it reads RR. A helical membrane pass occupies residues 138-158; that stretch reads SAILLASALCTVGSAVLAAAA. Over 159 to 167 the chain is Extracellular; sequence NKETLLAGR. Residues 168–188 form a helical membrane-spanning segment; it reads LVVGLGIGIASMTVPVYIAEV. At 189–201 the chain is on the cytoplasmic side; sequence SPPNLRGRLVTIN. A helical membrane pass occupies residues 202-222; the sequence is TLFITGGQFFASVVDGAFSYL. Over 223 to 228 the chain is Extracellular; sequence QKDGWR. The chain crosses the membrane as a helical span at residues 229–249; the sequence is YMLGLAAIPAVIQFLGFLFLP. Over 250–313 the chain is Cytoplasmic; the sequence is ESPRWLIQKG…RMLSYPPTRR (64 aa). The helical transmembrane segment at 314–334 threads the bilayer; sequence ALAVGCGLQMFQQLSGINTIM. Residues 335–352 are Extracellular-facing; the sequence is YYSATILQMSGVEDDRLA. A helical transmembrane segment spans residues 353-373; the sequence is IWLASITAFTNFIFTLVGVWL. Over 374-382 the chain is Cytoplasmic; sequence VEKVGRRKL. The helical transmembrane segment at 383–403 threads the bilayer; it reads TFGSLAGTTVALTILALGFLL. Over 404 to 497 the chain is Extracellular; that stretch reads SAQVSPRVTF…SFCPTPYSWT (94 aa). 3 N-linked (GlcNAc...) asparagine glycosylation sites follow: N422, N447, and N474. Residues 498–518 form a helical membrane-spanning segment; the sequence is ALVGLVLYLVFFAPGMGPMPW. Topologically, residues 519 to 538 are cytoplasmic; it reads TVNSEIYPLWARSTGNACSA. The chain crosses the membrane as a helical span at residues 539–559; that stretch reads GINWIFNVLVSLTFLHTAEYL. The Extracellular segment spans residues 560–562; the sequence is TYY. A helical transmembrane segment spans residues 563–583; that stretch reads GAFFLYAGFAAVGLLFVYGCL. At 584–637 the chain is on the cytoplasmic side; sequence PETKGKKLEEIESLFDHRLCTCGTADSDEGRYIEYIRVKGSNYHLSDNDASDVE. 2 positions are modified to phosphoserine: S629 and S634.

It belongs to the major facilitator superfamily. Sugar transporter (TC 2.A.1.1) family.

The protein localises to the cell membrane. The catalysed reaction is myo-inositol(out) + H(+)(out) = myo-inositol(in) + H(+)(in). H(+)-myo-inositol cotransporter. Can also transport related stereoisomers. In Rattus norvegicus (Rat), this protein is Proton myo-inositol cotransporter.